The primary structure comprises 348 residues: MTDTTIRLTQTVKGAGCAAKLAPGDLDRALCGLDLPVDPNLLVGLERADDAGVYRISDDLALVQTIDFFPPMVDDPYSFGQIAAANALSDIYAMGGVPKTAMNVVAFPAKTMDISVLRSVIEGGLDKMREAGVVLVGGHTVEDSELKYGLSVTGFIHPDRILTKKNLQTGDCLILTKPLGTGIVSTAIKAGLAGSDLTERVIRNMTALNRDAALVMGDFTVHACTDITGFGFLGHLAEMVVDSGCGVRIIAADVPHYPEALEWADMGLIPGGAYNNRDFRGMFVDFGAAVSRRFRDLLFDPQTSGGLLIAVAPNEAEQLVAALKATGIECAAVVGEVVEEPLERIVVE.

The active site involves cysteine 17. Residues lysine 20 and 47 to 49 (RAD) contribute to the ATP site. Aspartate 50 lines the Mg(2+) pocket. ATP is bound by residues aspartate 67, aspartate 90, and 138-140 (GHT). Aspartate 90 serves as a coordination point for Mg(2+). Aspartate 226 serves as a coordination point for Mg(2+).

The protein belongs to the selenophosphate synthase 1 family. Class I subfamily. Homodimer. The cofactor is Mg(2+).

It catalyses the reaction hydrogenselenide + ATP + H2O = selenophosphate + AMP + phosphate + 2 H(+). Functionally, synthesizes selenophosphate from selenide and ATP. The chain is Selenide, water dikinase from Pelobacter propionicus (strain DSM 2379 / NBRC 103807 / OttBd1).